The primary structure comprises 28 residues: Putative GDSL-motif lipase/hydrolase-like protein (28 aa).

The protein belongs to the 'GDSL' lipolytic enzyme family.

This is Putative GDSL-motif lipase/hydrolase-like protein from Populus euphratica (Euphrates poplar).